A 463-amino-acid chain; its full sequence is Probable Xaa-Pro aminopeptidase pepP (463 aa).

Mn(2+)-binding residues include D259, D270, E393, and E433.

Belongs to the peptidase M24B family. Mn(2+) is required as a cofactor.

It carries out the reaction Release of any N-terminal amino acid, including proline, that is linked to proline, even from a dipeptide or tripeptide.. In terms of biological role, catalyzes the removal of a penultimate prolyl residue from the N-termini of peptides. The protein is Probable Xaa-Pro aminopeptidase pepP (pepP) of Pyrenophora tritici-repentis (strain Pt-1C-BFP) (Wheat tan spot fungus).